The sequence spans 514 residues: MTGPAPSALRPEHPVARPLAQLVALFGLDVRGDLDGVEVTGAALASSAVEPGDLYVGVPGRNAHGAAYAAAAAEAGAVAVLTDGDGADLAAAAGLPIVVTADPRAALGAVAAWIHRTEDNAATLFGVTGTNGKTSVVYLLYAILGQLGIVAGLTSTAERRIGEHAITSTLTTPEATELHALLARMREEGVRAAAIEVSAQALSRHRVDGIEFDVAGFTNLSHDHLDDYTAMPDYFAAKLELFQPDRARRGVVTVDSEWGHRLVEQSRIPVTTLSSVAGSEADWRVTVLEETLARTAFALEGPGGRLLETSVPLLGAYNASNAALAIVMLVESGYDLDAIGAALERDGGIDAYIPGRAERLSGDRGPVVFIDYGHTPDAFSSTLAALRRVTAGRIVMVFGADGDRDITKRAEMGAIAARGADAVVITDFHPRWEDPATIRAALLEGARNAVPERDLYEVPDPRTAFRTALSLAGEGDVVLYAGPGHEDYQEAAGERIPYSARDDARLALREAGWL.

Leu44 and Ser46 together coordinate UDP-N-acetyl-alpha-D-muramoyl-L-alanyl-D-glutamate. 129–135 (GTNGKTS) contributes to the ATP binding site. Residues 171–172 (TT), Ser198, and Arg206 contribute to the UDP-N-acetyl-alpha-D-muramoyl-L-alanyl-D-glutamate site. Lys238 bears the N6-carboxylysine mark.

Belongs to the MurCDEF family. MurE subfamily. In terms of processing, carboxylation is probably crucial for Mg(2+) binding and, consequently, for the gamma-phosphate positioning of ATP.

It localises to the cytoplasm. It functions in the pathway cell wall biogenesis; peptidoglycan biosynthesis. Catalyzes the addition of an amino acid to the nucleotide precursor UDP-N-acetylmuramoyl-L-alanyl-D-glutamate (UMAG) in the biosynthesis of bacterial cell-wall peptidoglycan. In Leifsonia xyli subsp. xyli (strain CTCB07), this protein is UDP-N-acetylmuramyl-tripeptide synthetase.